A 255-amino-acid chain; its full sequence is Carboxy-S-adenosyl-L-methionine synthase (255 aa).

S-adenosyl-L-methionine-binding positions include Y45, 70-72 (GCS), 124-125 (DI), and N139.

The protein belongs to the class I-like SAM-binding methyltransferase superfamily. Cx-SAM synthase family. Homodimer.

It catalyses the reaction prephenate + S-adenosyl-L-methionine = carboxy-S-adenosyl-L-methionine + 3-phenylpyruvate + H2O. In terms of biological role, catalyzes the conversion of S-adenosyl-L-methionine (SAM) to carboxy-S-adenosyl-L-methionine (Cx-SAM). In Hamiltonella defensa subsp. Acyrthosiphon pisum (strain 5AT), this protein is Carboxy-S-adenosyl-L-methionine synthase.